The primary structure comprises 107 residues: Phosphoribosyl-ATP pyrophosphatase (107 aa).

Belongs to the PRA-PH family.

The protein localises to the cytoplasm. The enzyme catalyses 1-(5-phospho-beta-D-ribosyl)-ATP + H2O = 1-(5-phospho-beta-D-ribosyl)-5'-AMP + diphosphate + H(+). It participates in amino-acid biosynthesis; L-histidine biosynthesis; L-histidine from 5-phospho-alpha-D-ribose 1-diphosphate: step 2/9. The sequence is that of Phosphoribosyl-ATP pyrophosphatase from Neisseria gonorrhoeae (strain ATCC 700825 / FA 1090).